Here is a 561-residue protein sequence, read N- to C-terminus: Arginine--tRNA ligase (561 aa).

The short motif at 119–129 is the 'HIGH' region element; that stretch reads PNIAKPMSMGH.

It belongs to the class-I aminoacyl-tRNA synthetase family. Monomer.

It is found in the cytoplasm. It carries out the reaction tRNA(Arg) + L-arginine + ATP = L-arginyl-tRNA(Arg) + AMP + diphosphate. This Lactobacillus acidophilus (strain ATCC 700396 / NCK56 / N2 / NCFM) protein is Arginine--tRNA ligase.